Consider the following 839-residue polypeptide: Molybdenum cofactor sulfurase (839 aa).

Residue K237 is modified to N6-(pyridoxal phosphate)lysine. C401 is a catalytic residue. Positions 651–662 (DQNYSQKQSPSM) are enriched in polar residues. The disordered stretch occupies residues 651 to 678 (DQNYSQKQSPSMPGSFPQAPSSPDPYPT). One can recognise an MOSC domain in the interval 656-834 (QKQSPSMPGS…IMVGDAVTPS (179 aa)).

The protein belongs to the class-V pyridoxal-phosphate-dependent aminotransferase family. MOCOS subfamily. Requires pyridoxal 5'-phosphate as cofactor.

It catalyses the reaction Mo-molybdopterin + L-cysteine + AH2 = thio-Mo-molybdopterin + L-alanine + A + H2O. Its pathway is cofactor biosynthesis; molybdopterin biosynthesis. Functionally, sulfurates the molybdenum cofactor. Sulfation of molybdenum is essential for xanthine dehydrogenase (XDH) and aldehyde oxidase (ADO) enzymes in which molybdenum cofactor is liganded by 1 oxygen and 1 sulfur atom in active form. The sequence is that of Molybdenum cofactor sulfurase from Emericella nidulans (strain FGSC A4 / ATCC 38163 / CBS 112.46 / NRRL 194 / M139) (Aspergillus nidulans).